Reading from the N-terminus, the 105-residue chain is uncharacterized protein (105 aa).

Positions 1 to 19 are cleaved as a signal peptide; the sequence is MKLVFIFATAAIMGVVVYG.

This is an uncharacterized protein from Magallana gigas (Pacific oyster).